A 218-amino-acid chain; its full sequence is Cytochrome P450 3A19 (218 aa).

Residue C153 coordinates heme.

This sequence belongs to the cytochrome P450 family. Heme is required as a cofactor.

It is found in the endoplasmic reticulum membrane. The protein resides in the microsome membrane. It carries out the reaction an organic molecule + reduced [NADPH--hemoprotein reductase] + O2 = an alcohol + oxidized [NADPH--hemoprotein reductase] + H2O + H(+). Functionally, cytochromes P450 are a group of heme-thiolate monooxygenases. In liver microsomes, this enzyme is involved in an NADPH-dependent electron transport pathway. It oxidizes a variety of structurally unrelated compounds, including steroids, fatty acids, and xenobiotics. The polypeptide is Cytochrome P450 3A19 (CYP3A19) (Capra hircus aegagrus (Wild goat)).